We begin with the raw amino-acid sequence, 222 residues long: Octanoyltransferase (222 aa).

The BPL/LPL catalytic domain maps to 34-214 (GEKNSTVLIL…EFSKHDEALV (181 aa)). Residues 72–79 (RGGKLTWH), 144–146 (AIG), and 157–159 (GVA) each bind substrate. The Acyl-thioester intermediate role is filled by Cys-175.

It belongs to the LipB family.

The protein resides in the cytoplasm. It catalyses the reaction octanoyl-[ACP] + L-lysyl-[protein] = N(6)-octanoyl-L-lysyl-[protein] + holo-[ACP] + H(+). Its pathway is protein modification; protein lipoylation via endogenous pathway; protein N(6)-(lipoyl)lysine from octanoyl-[acyl-carrier-protein]: step 1/2. In terms of biological role, catalyzes the transfer of endogenously produced octanoic acid from octanoyl-acyl-carrier-protein onto the lipoyl domains of lipoate-dependent enzymes. Lipoyl-ACP can also act as a substrate although octanoyl-ACP is likely to be the physiological substrate. The polypeptide is Octanoyltransferase (Paenarthrobacter aurescens (strain TC1)).